Consider the following 58-residue polypeptide: Small ribosomal subunit protein bS21 (58 aa).

The interval 35 to 58 is disordered; the sequence is REHYESPSVRRKKKSEAARKRRYK. Residues 43–58 show a composition bias toward basic residues; that stretch reads VRRKKKSEAARKRRYK.

This sequence belongs to the bacterial ribosomal protein bS21 family.

The polypeptide is Small ribosomal subunit protein bS21 (Acetivibrio thermocellus (strain ATCC 27405 / DSM 1237 / JCM 9322 / NBRC 103400 / NCIMB 10682 / NRRL B-4536 / VPI 7372) (Clostridium thermocellum)).